A 118-amino-acid polypeptide reads, in one-letter code: Protein LH1 (118 aa).

In Snake adenovirus serotype 1 (SnAdV-1), this protein is Protein LH1.